A 312-amino-acid chain; its full sequence is Glutathione synthetase (312 aa).

One can recognise an ATP-grasp domain in the interval 125-309 (KIFVTEFPDL…IAALFWDAVE (185 aa)). An ATP-binding site is contributed by 151-207 (RREFGDIILKPLYGNGGAGVFHLADGDRNLTSLLEMFGQLFREPFIAQRYLKDVRAG). 2 residues coordinate Mg(2+): glutamate 280 and asparagine 282.

The protein belongs to the prokaryotic GSH synthase family. The cofactor is Mg(2+). It depends on Mn(2+) as a cofactor.

It carries out the reaction gamma-L-glutamyl-L-cysteine + glycine + ATP = glutathione + ADP + phosphate + H(+). The protein operates within sulfur metabolism; glutathione biosynthesis; glutathione from L-cysteine and L-glutamate: step 2/2. This chain is Glutathione synthetase, found in Brucella melitensis biotype 1 (strain ATCC 23456 / CCUG 17765 / NCTC 10094 / 16M).